A 428-amino-acid polypeptide reads, in one-letter code: Beta-1,3-galactosyl-O-glycosyl-glycoprotein beta-1,6-N-acetylglucosaminyltransferase 4 (428 aa).

At 1 to 12 (MRRCAVLHRLRC) the chain is on the cytoplasmic side. A helical; Signal-anchor for type II membrane protein transmembrane segment spans residues 13-30 (KFYVFVVSLFVVVKLVYL). At 31–428 (KISMDNSIYI…QLQQCLRRVS (398 aa)) the chain is on the lumenal side. Residue asparagine 59 is glycosylated (N-linked (GlcNAc...) asparagine). Cystine bridges form between cysteine 60–cysteine 214, cysteine 148–cysteine 369, cysteine 169–cysteine 196, and cysteine 378–cysteine 410.

This sequence belongs to the glycosyltransferase 14 family.

The protein resides in the golgi apparatus membrane. It carries out the reaction a 3-O-[beta-D-galactosyl-(1-&gt;3)-N-acetyl-alpha-D-galactosaminyl]-L-seryl-[protein] + UDP-N-acetyl-alpha-D-glucosamine = 3-O-{beta-D-galactosyl-(1-&gt;3)-[N-acetyl-beta-D-glucosaminyl-(1-&gt;6)]-N-acetyl-alpha-D-galactosaminyl}-L-seryl-[protein] + UDP + H(+). The catalysed reaction is a 3-O-[beta-D-galactosyl-(1-&gt;3)-N-acetyl-alpha-D-galactosaminyl]-L-threonyl-[protein] + UDP-N-acetyl-alpha-D-glucosamine = a 3-O-{beta-D-galactosyl-(1-&gt;3)-[N-acetyl-beta-D-glucosaminyl-(1-&gt;6)]-N-acetyl-alpha-D-galactosaminyl}-L-threonyl-[protein] + UDP + H(+). It functions in the pathway protein modification; protein glycosylation. Its function is as follows. Glycosyltransferase that mediates core 2 O-glycan branching, an important step in mucin-type biosynthesis. The chain is Beta-1,3-galactosyl-O-glycosyl-glycoprotein beta-1,6-N-acetylglucosaminyltransferase 4 (gcnt4) from Danio rerio (Zebrafish).